Reading from the N-terminus, the 811-residue chain is DNA mismatch repair protein MutS (811 aa).

595–602 (GPNMSGKS) lines the ATP pocket.

It belongs to the DNA mismatch repair MutS family.

Its function is as follows. This protein is involved in the repair of mismatches in DNA. It is possible that it carries out the mismatch recognition step. This protein has a weak ATPase activity. The sequence is that of DNA mismatch repair protein MutS from Pseudothermotoga lettingae (strain ATCC BAA-301 / DSM 14385 / NBRC 107922 / TMO) (Thermotoga lettingae).